Reading from the N-terminus, the 518-residue chain is Nicotine N-demethylase CYP82E3 (518 aa).

The helical transmembrane segment at 2–22 (VFPVEAIVGLVTFTFLFYFLW) threads the bilayer. K254 is covalently cross-linked (Glycyl lysine isopeptide (Lys-Gly) (interchain with G-Cter in ubiquitin)). C458 contributes to the heme binding site.

Belongs to the cytochrome P450 family. CYP82E2 subfamily. Heme serves as cofactor. In terms of tissue distribution, expressed in leaves.

It localises to the membrane. It carries out the reaction (S)-nicotine + reduced [NADPH--hemoprotein reductase] + O2 = (S)-nornicotine + formaldehyde + oxidized [NADPH--hemoprotein reductase] + H2O + H(+). Its pathway is alkaloid biosynthesis; nicotine biosynthesis. Functionally, involved in the biosynthesis of pyridine alkaloid natural products, leading mainly to the production of anabasine, anatabine, nicotine and nornicotine, effective deterrents against herbivores with antiparasitic and pesticide properties (neurotoxins); nornicotine serves as the precursor in the synthesis of the carcinogen compound N'-nitrosonornicotine (NNN). Catalyzes the demethylation of nicotine to form nornicotine. The chain is Nicotine N-demethylase CYP82E3 from Nicotiana tomentosiformis (Tobacco).